The chain runs to 192 residues: GTP cyclohydrolase-2 (192 aa).

Residue 50–54 coordinates GTP; that stretch reads RLHSE. Zn(2+) is bound by residues Cys55, Cys66, and Cys68. GTP is bound by residues 92-94 and Thr114; that span reads EGR. Residue Asp126 is the Proton acceptor of the active site. Residue Arg128 is the Nucleophile of the active site. Residues Thr149 and Lys154 each contribute to the GTP site.

It belongs to the GTP cyclohydrolase II family. Requires Zn(2+) as cofactor.

It carries out the reaction GTP + 4 H2O = 2,5-diamino-6-hydroxy-4-(5-phosphoribosylamino)-pyrimidine + formate + 2 phosphate + 3 H(+). It participates in cofactor biosynthesis; riboflavin biosynthesis; 5-amino-6-(D-ribitylamino)uracil from GTP: step 1/4. Its function is as follows. Catalyzes the conversion of GTP to 2,5-diamino-6-ribosylamino-4(3H)-pyrimidinone 5'-phosphate (DARP), formate and pyrophosphate. This is GTP cyclohydrolase-2 from Helicobacter pylori (strain Shi470).